We begin with the raw amino-acid sequence, 1005 residues long: Probable histidine kinase 4 (1005 aa).

Residues 1–37 lie on the Cytoplasmic side of the membrane; the sequence is MGVGGGGGGGGGEAAAAVAVEGDEAGKGRRWWRVKVK. A helical transmembrane segment spans residues 38-58; it reads LSTVAVVAWVLASAALWAGLH. Residues 59 to 333 are Extracellular-facing; sequence WRFRRAALHK…YRNKLHVSWS (275 aa). Positions 110 to 321 constitute a CHASE domain; it reads HPPALDQDTF…GDPLRKHQMV (212 aa). The helical transmembrane segment at 334–354 threads the bilayer; sequence AITTPSGVFVICMLVGYIIYA. The Cytoplasmic portion of the chain corresponds to 355–1005; that stretch reads AWSRYDNVKE…QKFLGPCVSS (651 aa). Residues 389–675 form the Histidine kinase domain; sequence TVSHEIRTPM…TFTFTAVLRR (287 aa). At histidine 392 the chain carries Phosphohistidine; by autocatalysis. Response regulatory domains lie at 700 to 829 and 862 to 999; these read SALL…FQAL and NILV…QKFL. Aspartate 912 bears the 4-aspartylphosphate mark.

Post-translationally, activation probably requires a transfer of a phosphate group between a His in the transmitter domain and an Asp of the receiver domain. In terms of tissue distribution, highly expressed in young leaves and spikelets, and at lower levels in roots, mature leaves and stems.

The protein localises to the cell membrane. It carries out the reaction ATP + protein L-histidine = ADP + protein N-phospho-L-histidine.. In terms of biological role, cytokinin receptor related to bacterial two-component regulators. Functions as a histidine kinase and transmits the stress signal to a downstream MAPK cascade. This Oryza sativa subsp. japonica (Rice) protein is Probable histidine kinase 4.